The following is a 191-amino-acid chain: MQVILLERIAKLGQMGEVVKVRDGFARNYLLPTGKALRANAANKARFDAERSTLEARNLERKSEAQTVADVLNGKSFIVVRSAGETGQLYGSVAARDIIEALAAEGFTVSRNQVELNNPIKTIGLHNVTMHLHAEVEIAIEINVARSAEEAERQAKGESLTSADAIYGVDEDALRPEDFFDPDADRDGDDE.

Residues 150–191 (EAERQAKGESLTSADAIYGVDEDALRPEDFFDPDADRDGDDE) are disordered. The span at 179–191 (FFDPDADRDGDDE) shows a compositional bias: acidic residues.

The protein belongs to the bacterial ribosomal protein bL9 family.

Functionally, binds to the 23S rRNA. This Allorhizobium ampelinum (strain ATCC BAA-846 / DSM 112012 / S4) (Agrobacterium vitis (strain S4)) protein is Large ribosomal subunit protein bL9.